The chain runs to 366 residues: S-adenosylmethionine synthase 1 (366 aa).

Glu18 lines the K(+) pocket. 2 residues coordinate L-methionine: Glu31 and Gln74. ATP is bound by residues 142–144 (DGN), 210–213 (SGRF), Asp221, 227–228 (RK), Ala244, Lys248, and Lys252. Asp221 contributes to the L-methionine binding site. Lys252 is a binding site for L-methionine.

It belongs to the AdoMet synthase family. Homotetramer. Mn(2+) is required as a cofactor. It depends on Mg(2+) as a cofactor. The cofactor is Co(2+). Requires K(+) as cofactor.

The protein resides in the cytoplasm. The catalysed reaction is L-methionine + ATP + H2O = S-adenosyl-L-methionine + phosphate + diphosphate. The protein operates within amino-acid biosynthesis; S-adenosyl-L-methionine biosynthesis; S-adenosyl-L-methionine from L-methionine: step 1/1. Catalyzes the formation of S-adenosylmethionine from methionine and ATP. The reaction comprises two steps that are both catalyzed by the same enzyme: formation of S-adenosylmethionine (AdoMet) and triphosphate, and subsequent hydrolysis of the triphosphate. The polypeptide is S-adenosylmethionine synthase 1 (SAMS1) (Pisum sativum (Garden pea)).